Consider the following 54-residue polypeptide: Ovomucoid (54 aa).

The region spanning V4–C54 is the Kazal-like domain. Intrachain disulfides connect C6/C36, C14/C33, and C22/C54. N-linked (GlcNAc...) asparagine glycosylation occurs at N43.

The protein resides in the secreted. This Carpococcyx renauldi (Coral-billed ground-cuckoo) protein is Ovomucoid.